The sequence spans 2378 residues: Dimodular nonribosomal peptide synthase (2378 aa).

Carrier domains lie at 961-1036 (APRT…DLAQ) and 2036-2111 (GPRT…EMGS). An O-(pantetheine 4'-phosphoryl)serine mark is found at serine 996 and serine 2071.

The protein belongs to the ATP-dependent AMP-binding enzyme family. The cofactor is pantetheine 4'-phosphate.

It catalyses the reaction holo-[peptidyl-carrier protein] + L-threonine + ATP = L-threonyl-[peptidyl-carrier protein] + AMP + diphosphate. The catalysed reaction is holo-[peptidyl-carrier protein] + glycine + ATP = glycyl-[peptidyl-carrier protein] + AMP + diphosphate. It participates in siderophore biosynthesis; bacillibactin biosynthesis. Specifically adenylates L-threonine and, to a lesser extent, glycine and covalently loads both amino acids onto their corresponding peptidyl carrier domains. In Bacillus subtilis (strain 168), this protein is Dimodular nonribosomal peptide synthase (dhbF).